A 667-amino-acid polypeptide reads, in one-letter code: Protein MAIN-LIKE 2 (667 aa).

The residue at position 1 (Met-1) is an N-acetylmethionine. A compositionally biased stretch (basic residues) spans 492–508 (MRGKERVRRKGMGKRRK). Disordered regions lie at residues 492 to 523 (MRGK…EDES) and 594 to 667 (KLQE…TVVA). The segment covering 512–523 (PMEDYGGSEDES) has biased composition (acidic residues). Composition is skewed to basic and acidic residues over residues 608–618 (YDVKKEDKESK) and 656–667 (SLDRRGENTVVA).

In terms of tissue distribution, expressed in root tips, the shoot apical meristem (SAM), leaves, mature flowers and embryos.

Its subcellular location is the nucleus. Maybe required to maintain cell division activity in meristematic cells. The sequence is that of Protein MAIN-LIKE 2 from Arabidopsis thaliana (Mouse-ear cress).